The sequence spans 557 residues: Dihydroxy-acid dehydratase 1 (557 aa).

Position 50 (Cys-50) interacts with [2Fe-2S] cluster. Asp-82 contributes to the Mg(2+) binding site. Residue Cys-123 coordinates [2Fe-2S] cluster. 2 residues coordinate Mg(2+): Asp-124 and Lys-125. Residue Lys-125 is modified to N6-carboxylysine. Cys-195 serves as a coordination point for [2Fe-2S] cluster. Glu-447 contacts Mg(2+). The active-site Proton acceptor is the Ser-473.

The protein belongs to the IlvD/Edd family. Homodimer. Requires [2Fe-2S] cluster as cofactor. It depends on Mg(2+) as a cofactor.

It catalyses the reaction (2R)-2,3-dihydroxy-3-methylbutanoate = 3-methyl-2-oxobutanoate + H2O. The enzyme catalyses (2R,3R)-2,3-dihydroxy-3-methylpentanoate = (S)-3-methyl-2-oxopentanoate + H2O. It functions in the pathway amino-acid biosynthesis; L-isoleucine biosynthesis; L-isoleucine from 2-oxobutanoate: step 3/4. Its pathway is amino-acid biosynthesis; L-valine biosynthesis; L-valine from pyruvate: step 3/4. In terms of biological role, functions in the biosynthesis of branched-chain amino acids. Catalyzes the dehydration of (2R,3R)-2,3-dihydroxy-3-methylpentanoate (2,3-dihydroxy-3-methylvalerate) into 2-oxo-3-methylpentanoate (2-oxo-3-methylvalerate) and of (2R)-2,3-dihydroxy-3-methylbutanoate (2,3-dihydroxyisovalerate) into 2-oxo-3-methylbutanoate (2-oxoisovalerate), the penultimate precursor to L-isoleucine and L-valine, respectively. This Cupriavidus pinatubonensis (strain JMP 134 / LMG 1197) (Cupriavidus necator (strain JMP 134)) protein is Dihydroxy-acid dehydratase 1.